The sequence spans 239 residues: Serine protease SplD (239 aa).

The first 36 residues, 1-36, serve as a signal peptide directing secretion; the sequence is MNKNIIIKSIAALTILTSITGVGTTVVDGIQQTAKA. Catalysis depends on charge relay system residues His-75, Asp-114, and Ser-192.

Belongs to the peptidase S1B family.

It localises to the secreted. The chain is Serine protease SplD (splD) from Staphylococcus aureus (strain COL).